A 1125-amino-acid polypeptide reads, in one-letter code: Phytochrome A (1125 aa).

2 stretches are compositionally biased toward low complexity: residues 1-14 (MSSSRPSHSSSNSA) and 39-48 (SGSSFDYSSS). Disordered regions lie at residues 1-22 (MSSSRPSHSSSNSARSRHSARI) and 38-64 (ESGSSFDYSSSVRVTDSVGGDQPPRSD). The GAF domain maps to 218-401 (SMERLCDTMV…VFAIHVNKEL (184 aa)). Cys-323 contacts phytochromobilin. PAS domains lie at 617–687 (VTSE…LQGK) and 750–821 (DYKA…VNLG). Residues 901 to 1117 (YLKKQIWNPL…SFIISVELAG (217 aa)) form the Histidine kinase domain.

This sequence belongs to the phytochrome family. Homodimer. Contains one covalently linked phytochromobilin chromophore.

Functionally, regulatory photoreceptor which exists in two forms that are reversibly interconvertible by light: the Pr form that absorbs maximally in the red region of the spectrum and the Pfr form that absorbs maximally in the far-red region. Photoconversion of Pr to Pfr induces an array of morphogenic responses, whereas reconversion of Pfr to Pr cancels the induction of those responses. Pfr controls the expression of a number of nuclear genes including those encoding the small subunit of ribulose-bisphosphate carboxylase, chlorophyll A/B binding protein, protochlorophyllide reductase, rRNA, etc. It also controls the expression of its own gene(s) in a negative feedback fashion. This is Phytochrome A (PHYA) from Populus tremuloides (Quaking aspen).